The sequence spans 150 residues: Arginine repressor (150 aa).

The protein belongs to the ArgR family.

It localises to the cytoplasm. It participates in amino-acid biosynthesis; L-arginine biosynthesis [regulation]. In terms of biological role, regulates arginine biosynthesis genes. This Clostridium beijerinckii (strain ATCC 51743 / NCIMB 8052) (Clostridium acetobutylicum) protein is Arginine repressor.